The primary structure comprises 407 residues: Putative F-box protein At2g16220 (407 aa).

The region spanning 1 to 45 (MNSHFLTNDLILEVLSRLPLKSVARFHCVSKRWASMFGSPYFKEL) is the F-box domain. A disordered region spans residues 385 to 407 (PPSVQPEYDESDSESEEDREIII). Residues 391–407 (EYDESDSESEEDREIII) show a composition bias toward acidic residues.

The polypeptide is Putative F-box protein At2g16220 (Arabidopsis thaliana (Mouse-ear cress)).